The following is a 916-amino-acid chain: Protein translocase subunit SecA (916 aa).

ATP is bound by residues Gln87, 105–109, and Asp507; that span reads GEGKT. Cys900, Cys902, Cys911, and His912 together coordinate Zn(2+).

Belongs to the SecA family. Monomer and homodimer. Part of the essential Sec protein translocation apparatus which comprises SecA, SecYEG and auxiliary proteins SecDF-YajC and YidC. Zn(2+) is required as a cofactor.

It is found in the cell inner membrane. Its subcellular location is the cytoplasm. It carries out the reaction ATP + H2O + cellular proteinSide 1 = ADP + phosphate + cellular proteinSide 2.. Part of the Sec protein translocase complex. Interacts with the SecYEG preprotein conducting channel. Has a central role in coupling the hydrolysis of ATP to the transfer of proteins into and across the cell membrane, serving both as a receptor for the preprotein-SecB complex and as an ATP-driven molecular motor driving the stepwise translocation of polypeptide chains across the membrane. This is Protein translocase subunit SecA from Neisseria gonorrhoeae (strain NCCP11945).